The following is a 245-amino-acid chain: Probable transcriptional regulatory protein LVIS_1199 (245 aa).

Positions 1-23 (MSGHSKWHNIQGRKNAQDAKRGK) are disordered.

Belongs to the TACO1 family.

It is found in the cytoplasm. The protein is Probable transcriptional regulatory protein LVIS_1199 of Levilactobacillus brevis (strain ATCC 367 / BCRC 12310 / CIP 105137 / JCM 1170 / LMG 11437 / NCIMB 947 / NCTC 947) (Lactobacillus brevis).